Reading from the N-terminus, the 515-residue chain is 2,3-bisphosphoglycerate-independent phosphoglycerate mutase (515 aa).

Mn(2+) is bound by residues Asp-14 and Ser-63. The active site involves Ser-63. Substrate-binding positions include His-124, 154-155, Arg-186, Arg-192, 259-262, and Lys-334; these read RD and RADR. The Mn(2+) site is built by Asp-401, His-405, Asp-442, His-443, and His-460.

The protein belongs to the BPG-independent phosphoglycerate mutase family. It depends on Mg(2+) as a cofactor. Requires Mn(2+) as cofactor.

It catalyses the reaction (2R)-2-phosphoglycerate = (2R)-3-phosphoglycerate. It participates in carbohydrate degradation; glycolysis; pyruvate from D-glyceraldehyde 3-phosphate: step 3/5. Activity is not affected by 2,3-bisphosphoglycerate. Catalyzes the interconversion of 2-phosphoglycerate and 3-phosphoglycerate. The sequence is that of 2,3-bisphosphoglycerate-independent phosphoglycerate mutase from Onchocerca volvulus.